The following is a 414-amino-acid chain: CCA-adding enzyme (414 aa).

ATP is bound by residues glycine 8 and arginine 11. CTP-binding residues include glycine 8 and arginine 11. Mg(2+) is bound by residues aspartate 21 and aspartate 23. Residues arginine 91, arginine 137, and arginine 140 each contribute to the ATP site. CTP-binding residues include arginine 91, arginine 137, and arginine 140.

It belongs to the tRNA nucleotidyltransferase/poly(A) polymerase family. Bacterial CCA-adding enzyme type 2 subfamily. Mg(2+) serves as cofactor.

The catalysed reaction is a tRNA precursor + 2 CTP + ATP = a tRNA with a 3' CCA end + 3 diphosphate. It carries out the reaction a tRNA with a 3' CCA end + 2 CTP + ATP = a tRNA with a 3' CCACCA end + 3 diphosphate. In terms of biological role, catalyzes the addition and repair of the essential 3'-terminal CCA sequence in tRNAs without using a nucleic acid template. Adds these three nucleotides in the order of C, C, and A to the tRNA nucleotide-73, using CTP and ATP as substrates and producing inorganic pyrophosphate. tRNA 3'-terminal CCA addition is required both for tRNA processing and repair. Also involved in tRNA surveillance by mediating tandem CCA addition to generate a CCACCA at the 3' terminus of unstable tRNAs. While stable tRNAs receive only 3'-terminal CCA, unstable tRNAs are marked with CCACCA and rapidly degraded. The protein is CCA-adding enzyme of Buchnera aphidicola subsp. Acyrthosiphon pisum (strain Tuc7).